Consider the following 529-residue polypeptide: Non-reducing end alpha-L-arabinofuranosidase BoGH43B (529 aa).

The signal sequence occupies residues 1–23 (MMKNSCRLLLILIGLWMANVSLA). The active-site Proton acceptor is D38. Catalysis depends on E198, which acts as the Proton donor.

Belongs to the glycosyl hydrolase 43 family.

The protein resides in the periplasm. The enzyme catalyses Hydrolysis of terminal non-reducing alpha-L-arabinofuranoside residues in alpha-L-arabinosides.. The protein operates within glucan metabolism; xyloglucan degradation. Alpha-L-arabinofuranosidase involved in xyloglucan degradation by mediating the cleavage of terminal non-reducing alpha-L-arabinofuranoside residues in xyloglucan branches, converting the 'S' units to 'X' units. The polypeptide is Non-reducing end alpha-L-arabinofuranosidase BoGH43B (Bacteroides ovatus (strain ATCC 8483 / DSM 1896 / JCM 5824 / BCRC 10623 / CCUG 4943 / NCTC 11153)).